We begin with the raw amino-acid sequence, 150 residues long: Ribonuclease H (150 aa).

In terms of domain architecture, RNase H type-1 spans 1–142 (MSDSVEIFTD…ADQLANRGVD (142 aa)). Residues Asp10, Glu48, Asp70, and Asp134 each contribute to the Mg(2+) site.

Belongs to the RNase H family. In terms of assembly, monomer. Mg(2+) serves as cofactor.

The protein resides in the cytoplasm. The catalysed reaction is Endonucleolytic cleavage to 5'-phosphomonoester.. Functionally, endonuclease that specifically degrades the RNA of RNA-DNA hybrids. In Pseudomonas fluorescens (strain ATCC BAA-477 / NRRL B-23932 / Pf-5), this protein is Ribonuclease H.